Consider the following 173-residue polypeptide: ATP synthase subunit b (173 aa).

The helical transmembrane segment at 12–32 (LDVNPGLVVWTLVTFLVVVLV) threads the bilayer.

This sequence belongs to the ATPase B chain family. F-type ATPases have 2 components, F(1) - the catalytic core - and F(0) - the membrane proton channel. F(1) has five subunits: alpha(3), beta(3), gamma(1), delta(1), epsilon(1). F(0) has three main subunits: a(1), b(2) and c(10-14). The alpha and beta chains form an alternating ring which encloses part of the gamma chain. F(1) is attached to F(0) by a central stalk formed by the gamma and epsilon chains, while a peripheral stalk is formed by the delta and b chains.

It is found in the cell inner membrane. Functionally, f(1)F(0) ATP synthase produces ATP from ADP in the presence of a proton or sodium gradient. F-type ATPases consist of two structural domains, F(1) containing the extramembraneous catalytic core and F(0) containing the membrane proton channel, linked together by a central stalk and a peripheral stalk. During catalysis, ATP synthesis in the catalytic domain of F(1) is coupled via a rotary mechanism of the central stalk subunits to proton translocation. Component of the F(0) channel, it forms part of the peripheral stalk, linking F(1) to F(0). This chain is ATP synthase subunit b, found in Leptospira interrogans serogroup Icterohaemorrhagiae serovar copenhageni (strain Fiocruz L1-130).